The chain runs to 251 residues: 2,3-bisphosphoglycerate-dependent phosphoglycerate mutase 2 (251 aa).

Substrate-binding positions include 8–15 (RHGESTWN), 21–22 (TG), R60, 87–90 (ERHY), K98, 114–115 (RR), and 183–184 (GN). Catalysis depends on H9, which acts as the Tele-phosphohistidine intermediate. The Proton donor/acceptor role is filled by E87.

Belongs to the phosphoglycerate mutase family. BPG-dependent PGAM subfamily. As to quaternary structure, homodimer.

The catalysed reaction is (2R)-2-phosphoglycerate = (2R)-3-phosphoglycerate. Its pathway is carbohydrate degradation; glycolysis; pyruvate from D-glyceraldehyde 3-phosphate: step 3/5. In terms of biological role, catalyzes the interconversion of 2-phosphoglycerate and 3-phosphoglycerate. This is 2,3-bisphosphoglycerate-dependent phosphoglycerate mutase 2 from Nitrosospira multiformis (strain ATCC 25196 / NCIMB 11849 / C 71).